The chain runs to 459 residues: Beta-glucosidase (459 aa).

Glutamate 171 (proton donor) is an active-site residue. Glutamate 359 functions as the Nucleophile in the catalytic mechanism.

This sequence belongs to the glycosyl hydrolase 1 family.

The enzyme catalyses Hydrolysis of terminal, non-reducing beta-D-glucosyl residues with release of beta-D-glucose.. This is Beta-glucosidase (abg) from Agrobacterium sp. (strain ATCC 21400).